The sequence spans 90 residues: Cell division topological specificity factor (90 aa).

This sequence belongs to the MinE family.

Its function is as follows. Prevents the cell division inhibition by proteins MinC and MinD at internal division sites while permitting inhibition at polar sites. This ensures cell division at the proper site by restricting the formation of a division septum at the midpoint of the long axis of the cell. This chain is Cell division topological specificity factor, found in Pelotomaculum thermopropionicum (strain DSM 13744 / JCM 10971 / SI).